A 31-amino-acid chain; its full sequence is GTVPCGESCVFIPCITGIAGCSCKNKVCYID.

The cyclopeptide (Gly-Asp) cross-link spans 1–31 (GTVPCGESCVFIPCITGIAGCSCKNKVCYID). 3 cysteine pairs are disulfide-bonded: cysteine 5–cysteine 21, cysteine 9–cysteine 23, and cysteine 14–cysteine 28.

Contains 3 disulfide bonds. Post-translationally, this is a cyclic peptide.

Functionally, probably participates in a plant defense mechanism. This Clitoria ternatea (Butterfly pea) protein is Cyclotide cter-J.